The chain runs to 139 residues: Autophagy-related protein 31 (139 aa).

Belongs to the ATG31 family. As to quaternary structure, forms a stable complex with ATG17 and ATG29. Interacts directly with ATG29. The ATG17-ATG29-ATG31 complex interacts with the ATG1-ATG13 complex. Note=The interaction with the ATG1-ATG13 complex is induced by starvation.

The protein localises to the preautophagosomal structure. In terms of biological role, plays a role in starvation-induced autophagy. Involved in mitophagy. Functions with ATG17 and ATG29 at the preautophagosomal structure (PAS) in order to form normal autophagosomes under starvation conditions. This Kluyveromyces marxianus (strain DMKU3-1042 / BCC 29191 / NBRC 104275) (Yeast) protein is Autophagy-related protein 31.